The primary structure comprises 245 residues: tRNA1(Val) (adenine(37)-N6)-methyltransferase (245 aa).

This sequence belongs to the methyltransferase superfamily. tRNA (adenine-N(6)-)-methyltransferase family.

It localises to the cytoplasm. It catalyses the reaction adenosine(37) in tRNA1(Val) + S-adenosyl-L-methionine = N(6)-methyladenosine(37) in tRNA1(Val) + S-adenosyl-L-homocysteine + H(+). Its function is as follows. Specifically methylates the adenine in position 37 of tRNA(1)(Val) (anticodon cmo5UAC). This chain is tRNA1(Val) (adenine(37)-N6)-methyltransferase, found in Shigella dysenteriae serotype 1 (strain Sd197).